The following is a 472-amino-acid chain: 3-isopropylmalate dehydratase large subunit (472 aa).

Positions 347, 407, and 410 each coordinate [4Fe-4S] cluster.

The protein belongs to the aconitase/IPM isomerase family. LeuC type 1 subfamily. In terms of assembly, heterodimer of LeuC and LeuD. The cofactor is [4Fe-4S] cluster.

The catalysed reaction is (2R,3S)-3-isopropylmalate = (2S)-2-isopropylmalate. It functions in the pathway amino-acid biosynthesis; L-leucine biosynthesis; L-leucine from 3-methyl-2-oxobutanoate: step 2/4. Functionally, catalyzes the isomerization between 2-isopropylmalate and 3-isopropylmalate, via the formation of 2-isopropylmaleate. In Opitutus terrae (strain DSM 11246 / JCM 15787 / PB90-1), this protein is 3-isopropylmalate dehydratase large subunit.